A 258-amino-acid chain; its full sequence is Transcription cofactor vestigial-like protein 1 (258 aa).

Polar residues-rich tracts occupy residues 55–65 and 74–87; these read PQELTPSSQSE and SMSP…SPWT. The disordered stretch occupies residues 55-93; sequence PQELTPSSQSEGVMLKNDDSMSPNQWRYSSPWTKPQPEV.

It belongs to the vestigial family. Interacts with TEFs.

It localises to the nucleus. May act as a specific coactivator for the mammalian TEFs. This Homo sapiens (Human) protein is Transcription cofactor vestigial-like protein 1 (VGLL1).